The following is a 235-amino-acid chain: MELVKRGFLRACKNHSYLSFELIDDILAPLCANHKTTKPGSKEAIRALVAEINDTISDLGQLLVFIKYPVKAEEYLVYAKTDATPDSVANTGLTAEECQYFSKLLDKIASEEDCHIAWNDAYNDIVLQASSKPLKKSRMQELLQKWIQMGYFMEVTDRIYLGPRSLVELSFYLSSNHADNIKNCTLCKCLVLWDIRCGSCNIQYHRGCIQTYLQRRDICPSCGNLWTTPIRRSIG.

The segment at 181–225 (IKNCTLCKCLVLWDIRCGSCNIQYHRGCIQTYLQRRDICPSCGNL) adopts an RING-type; atypical zinc-finger fold. Residue threonine 185 is modified to Phosphothreonine.

Belongs to the NSE1 family. As to quaternary structure, component of the Smc5-Smc6 complex which consists at least of Smc5, Smc6, Nse1, Nse2, Nse4 and MAGE. Nse1, Nse4 and MAGE probably form a subcomplex that bridges the head domains of the Smc5-Smc6 heterodimer. Interacts with MAGE and Nse4.

It is found in the nucleus. It catalyses the reaction S-ubiquitinyl-[E2 ubiquitin-conjugating enzyme]-L-cysteine + [acceptor protein]-L-lysine = [E2 ubiquitin-conjugating enzyme]-L-cysteine + N(6)-ubiquitinyl-[acceptor protein]-L-lysine.. Component of the SMC5-SMC6 complex, a complex involved in repair of DNA double-strand breaks by homologous recombination. The complex may promote sister chromatid homologous recombination by recruiting the SMC1-SMC3 cohesin complex to double-strand breaks. This Drosophila melanogaster (Fruit fly) protein is Non-structural maintenance of chromosomes element 1 homolog.